Reading from the N-terminus, the 546-residue chain is Chaperonin GroEL (546 aa).

Residues 30 to 33, Lys-51, 87 to 91, Gly-415, 479 to 481, and Asp-495 each bind ATP; these read TLGP, DGTTT, and NAA. Residues 526–546 form a disordered region; the sequence is KKDEPAMPAGGGMGGMGGMDF. A compositionally biased stretch (gly residues) spans 534-546; the sequence is AGGGMGGMGGMDF.

Belongs to the chaperonin (HSP60) family. Forms a cylinder of 14 subunits composed of two heptameric rings stacked back-to-back. Interacts with the co-chaperonin GroES.

Its subcellular location is the cytoplasm. It carries out the reaction ATP + H2O + a folded polypeptide = ADP + phosphate + an unfolded polypeptide.. In terms of biological role, together with its co-chaperonin GroES, plays an essential role in assisting protein folding. The GroEL-GroES system forms a nano-cage that allows encapsulation of the non-native substrate proteins and provides a physical environment optimized to promote and accelerate protein folding. In Xanthomonas campestris pv. campestris (strain 8004), this protein is Chaperonin GroEL.